The sequence spans 358 residues: Uroporphyrinogen decarboxylase (358 aa).

Residues 29 to 33, D79, Y156, T211, and H329 each bind substrate; that span reads RQAGR.

It belongs to the uroporphyrinogen decarboxylase family. Homodimer.

The protein localises to the cytoplasm. The catalysed reaction is uroporphyrinogen III + 4 H(+) = coproporphyrinogen III + 4 CO2. It participates in porphyrin-containing compound metabolism; protoporphyrin-IX biosynthesis; coproporphyrinogen-III from 5-aminolevulinate: step 4/4. In terms of biological role, catalyzes the decarboxylation of four acetate groups of uroporphyrinogen-III to yield coproporphyrinogen-III. The chain is Uroporphyrinogen decarboxylase from Idiomarina loihiensis (strain ATCC BAA-735 / DSM 15497 / L2-TR).